A 270-amino-acid chain; its full sequence is Very long chain fatty acid elongase 3 (270 aa).

N-linked (GlcNAc...) asparagine glycosylation is present at Asn-6. Helical transmembrane passes span 29–49 (FFEE…VLIA) and 63–83 (LQGP…LGAV). A glycan (N-linked (GlcNAc...) asparagine) is linked at Asn-110. 5 helical membrane passes run 115 to 135 (FWSW…AFII), 140 to 160 (PLIF…SFGY), 164 to 184 (VPAG…MYTY), 198 to 218 (LPML…IVSI), and 235 to 255 (HLFW…HFFC). The Di-lysine motif signature appears at 266 to 270 (KTKSQ).

The protein belongs to the ELO family. ELOVL3 subfamily. In terms of assembly, interacts with TECR. N-Glycosylated. As to expression, testis.

It is found in the endoplasmic reticulum membrane. It carries out the reaction a very-long-chain acyl-CoA + malonyl-CoA + H(+) = a very-long-chain 3-oxoacyl-CoA + CO2 + CoA. It catalyses the reaction eicosanoyl-CoA + malonyl-CoA + H(+) = 3-oxodocosanoyl-CoA + CO2 + CoA. The catalysed reaction is hexadecanoyl-CoA + malonyl-CoA + H(+) = 3-oxooctadecanoyl-CoA + CO2 + CoA. The enzyme catalyses octadecanoyl-CoA + malonyl-CoA + H(+) = 3-oxoeicosanoyl-CoA + CO2 + CoA. It carries out the reaction (9Z)-octadecenoyl-CoA + malonyl-CoA + H(+) = 3-oxo-(11Z)-eicosenoyl-CoA + CO2 + CoA. It catalyses the reaction (9Z,12Z)-octadecadienoyl-CoA + malonyl-CoA + H(+) = (11Z,14Z)-3-oxoicosa-11,14-dienoyl-CoA + CO2 + CoA. The catalysed reaction is (9Z,12Z,15Z)-octadecatrienoyl-CoA + malonyl-CoA + H(+) = (11Z,14Z,17Z)-3-oxoeicosatrienoyl-CoA + CO2 + CoA. The enzyme catalyses docosanoyl-CoA + malonyl-CoA + H(+) = 3-oxotetracosanoyl-CoA + CO2 + CoA. It carries out the reaction tetradecanoyl-CoA + malonyl-CoA + H(+) = 3-oxohexadecanoyl-CoA + CO2 + CoA. It functions in the pathway lipid metabolism; polyunsaturated fatty acid biosynthesis. Catalyzes the first and rate-limiting reaction of the four reactions that constitute the long-chain fatty acids elongation cycle. This endoplasmic reticulum-bound enzymatic process allows the addition of 2 carbons to the chain of long- and very long-chain fatty acids (VLCFAs) per cycle. Condensing enzyme that exhibits activity toward saturated and unsaturated acyl-CoA substrates with higher activity toward C18 acyl-CoAs, especially C18:0 acyl-CoAs. May participate in the production of saturated and monounsaturated VLCFAs of different chain lengths that are involved in multiple biological processes as precursors of membrane lipids and lipid mediators. This Homo sapiens (Human) protein is Very long chain fatty acid elongase 3.